We begin with the raw amino-acid sequence, 151 residues long: MLESEVSGNAPHSLWIVGAADICRIALECIPLPKRLLAIKVSGTWSGMPWAIPDNIQTLLTSTWEPKFDTPEDRAHFCDSDMVCVYKILGSPPNPLKPPEIEPPQMSSTPGRLFCCGKCCKKEDRDAIAIPVRYTATGKSRIQKKCRAGSH.

This is an uncharacterized protein from Gallid herpesvirus 2 (strain GA) (GaHV-2).